We begin with the raw amino-acid sequence, 149 residues long: Large ribosomal subunit protein bL20m (149 aa).

Residues 1–9 (MVFLSLSRW) constitute a mitochondrion transit peptide.

The protein belongs to the bacterial ribosomal protein bL20 family. In terms of assembly, component of the mitochondrial ribosome large subunit (39S) which comprises a 16S rRNA and about 50 distinct proteins.

The protein localises to the mitochondrion. The sequence is that of Large ribosomal subunit protein bL20m (mrpl20) from Xenopus laevis (African clawed frog).